A 211-amino-acid chain; its full sequence is Large ribosomal subunit protein bL25 (211 aa).

Belongs to the bacterial ribosomal protein bL25 family. CTC subfamily. Part of the 50S ribosomal subunit; part of the 5S rRNA/L5/L18/L25 subcomplex. Contacts the 5S rRNA. Binds to the 5S rRNA independently of L5 and L18.

This is one of the proteins that binds to the 5S RNA in the ribosome where it forms part of the central protuberance. This Xanthomonas axonopodis pv. citri (strain 306) protein is Large ribosomal subunit protein bL25.